The sequence spans 481 residues: Glutamate--glyoxylate aminotransferase 2 (481 aa).

Lys291 carries the N6-(pyridoxal phosphate)lysine modification. The Peroxisomal targeting signal signature appears at 479 to 481; sequence SRM.

Belongs to the class-I pyridoxal-phosphate-dependent aminotransferase family. Alanine aminotransferase subfamily. As to quaternary structure, homodimer. Pyridoxal 5'-phosphate serves as cofactor. The N-terminus is blocked. As to expression, expressed at low levels in seedlings, leaves, flowers, roots, and green siliques.

It localises to the peroxisome. The enzyme catalyses L-alanine + 2-oxoglutarate = pyruvate + L-glutamate. It catalyses the reaction glyoxylate + L-alanine = glycine + pyruvate. It carries out the reaction glycine + 2-oxoglutarate = glyoxylate + L-glutamate. It functions in the pathway photosynthesis; C4 acid pathway. Its pathway is amino-acid degradation; L-alanine degradation via transaminase pathway; pyruvate from L-alanine: step 1/1. In terms of biological role, catalyzes the Glu:glyoxylate aminotransferase (GGT), Ala:glyoxylate aminotransferase (AGT), Ala:2-oxoglutarate aminotransferase (AKT) and Glu:pyruvate aminotransferase (GPT) reactions in peroxisomes. In Arabidopsis thaliana (Mouse-ear cress), this protein is Glutamate--glyoxylate aminotransferase 2 (GGAT2).